A 225-amino-acid polypeptide reads, in one-letter code: DNA-binding response regulator MtrA (225 aa).

The 114-residue stretch at 4 to 117 (RILVVDDDAS…ELVARVRARL (114 aa)) folds into the Response regulatory domain. A 4-aspartylphosphate modification is found at D53. Residues 125-224 (AEMLSIADVD…VRGVGYKAGP (100 aa)) constitute a DNA-binding region (ompR/PhoB-type).

Post-translationally, phosphorylated by MtrB.

Functionally, member of the two-component regulatory system MtrA/MtrB. This chain is DNA-binding response regulator MtrA (mtrA), found in Mycobacterium leprae (strain TN).